Reading from the N-terminus, the 210-residue chain is RNA binding protein, mRNA processing factor 2 (210 aa).

Basic and acidic residues predominate over residues 1 to 10 (MSNLKPDVEH). Residues 1 to 25 (MSNLKPDVEHCTGAGTGTGTGPSGP) are disordered. Ser2 is subject to N-acetylserine. The RRM domain maps to 31–108 (RTLFVSGLPV…QTLRLEFAKA (78 aa)). The segment at 41 to 51 (DIKPRELYLLF) is important for homodimerization.

In terms of assembly, homodimer. Interacts with EEF2.

Its subcellular location is the cytoplasm. The protein localises to the nucleus. The protein resides in the stress granule. Its function is as follows. RNA-binding protein involved in the regulation of smooth muscle cell differentiation and proliferation in the gastrointestinal system. Binds NOG mRNA, the major inhibitor of the bone morphogenetic protein (BMP) pathway. Mediates an increase of NOG mRNA levels, thereby contributing to the negative regulation of BMP signaling pathway and promoting reversible dedifferentiation and proliferation of smooth muscle cells. Acts as a pre-mRNA alternative splicing regulator. Mediates ACTN1 and FLNB alternative splicing. Likely binds to mRNA tandem CAC trinucleotide or CA dinucleotide motifs. This chain is RNA binding protein, mRNA processing factor 2 (Rbpms2), found in Rattus norvegicus (Rat).